The following is a 57-amino-acid chain: UPF0391 membrane protein RPA3029 (57 aa).

Transmembrane regions (helical) follow at residues 6 to 26 (WALIFLVVSIIAGIFGFTGIS) and 35 to 55 (ILFYVFVVIFVVLLILGFTIF).

This sequence belongs to the UPF0391 family.

Its subcellular location is the cell membrane. This Rhodopseudomonas palustris (strain ATCC BAA-98 / CGA009) protein is UPF0391 membrane protein RPA3029.